A 487-amino-acid chain; its full sequence is Beta-barrel assembly-enhancing protease (487 aa).

The N-terminal stretch at M1–A27 is a signal peptide. Residue H136 coordinates Zn(2+). Residue E137 is part of the active site. Positions 140 and 201 each coordinate Zn(2+). D205 (proton donor) is an active-site residue. TPR repeat units follow at residues R309–N342, W344–P376, V377–D409, and D427–G460.

It belongs to the peptidase M48 family. BepA subfamily. The cofactor is Zn(2+).

The protein localises to the periplasm. Its function is as follows. Functions both as a chaperone and a metalloprotease. Maintains the integrity of the outer membrane by promoting either the assembly or the elimination of outer membrane proteins, depending on their folding state. The protein is Beta-barrel assembly-enhancing protease of Escherichia coli O157:H7.